We begin with the raw amino-acid sequence, 362 residues long: Adenosine deaminase (362 aa).

Zn(2+) is bound by residues histidine 19 and histidine 21. Substrate contacts are provided by histidine 21, aspartate 23, and glycine 181. Residue histidine 208 participates in Zn(2+) binding. The active-site Proton donor is glutamate 211. Position 300 (aspartate 300) interacts with Zn(2+).

It belongs to the metallo-dependent hydrolases superfamily. Adenosine and AMP deaminases family. Adenosine deaminase subfamily. It depends on Zn(2+) as a cofactor.

It catalyses the reaction adenosine + H2O + H(+) = inosine + NH4(+). The enzyme catalyses 2'-deoxyadenosine + H2O + H(+) = 2'-deoxyinosine + NH4(+). In terms of biological role, catalyzes the hydrolytic deamination of adenosine and 2-deoxyadenosine. This is Adenosine deaminase from Mycolicibacterium gilvum (strain PYR-GCK) (Mycobacterium gilvum (strain PYR-GCK)).